A 151-amino-acid polypeptide reads, in one-letter code: Testis-expressed protein 29 (151 aa).

Over 1 to 56 the chain is Extracellular; it reads MEYVLEVKNSPRHLLKQFTVCDVPLYDICDYNVSRDRCQELGCCFYEGVCYKKAVP. Residues 57–77 form a helical membrane-spanning segment; it reads IYIHVFSALIVIIAGAFVITI. At 78 to 151 the chain is on the cytoplasmic side; that stretch reads IYRVIQESRK…TITEAEETED (74 aa). The interval 100–151 is disordered; the sequence is KSSEKAELASSSSKLGLKPASPGPPSAGPSMKSDEDKDDVTGTITEAEETED. A compositionally biased stretch (low complexity) spans 107 to 119; that stretch reads LASSSSKLGLKPA.

The protein localises to the membrane. The sequence is that of Testis-expressed protein 29 (TEX29) from Homo sapiens (Human).